Consider the following 345-residue polypeptide: Cytoskeleton protein RodZ (345 aa).

Over 1–111 (MNTEASQDQT…LGKKHKKRDG (111 aa)) the chain is Cytoplasmic. Positions 19–79 (LRQARESLGL…KLVHLPEDEL (61 aa)) constitute an HTH cro/C1-type domain. Positions 30 to 49 (QQTVAERLCLKVSTIRDIEE) form a DNA-binding region, H-T-H motif. The helical; Signal-anchor for type II membrane protein transmembrane segment at 112 to 132 (WLMSFTWLIVLVVLGLTGAWW) threads the bilayer. The Periplasmic portion of the chain corresponds to 133–345 (WQNHQAQQAE…RVARLTVGVE (213 aa)). The tract at residues 151–260 (SAQLSQNGGQ…LPTADAGVSG (110 aa)) is disordered. A compositionally biased stretch (polar residues) spans 188 to 225 (PLTNHSGSAITNSATTSSVPKTTSTEPVDTANTNTTMH). Residues 229 to 241 (AASAAVSPSQVPQ) are compositionally biased toward low complexity.

This sequence belongs to the RodZ family.

The protein localises to the cell inner membrane. Its function is as follows. Cytoskeletal protein that is involved in cell-shape control through regulation of the length of the long axis. This Yersinia pestis (strain Pestoides F) protein is Cytoskeleton protein RodZ.